Here is a 322-residue protein sequence, read N- to C-terminus: uncharacterized protein (322 aa).

The tract at residues 277–322 (LVTYGGKDGPSDNEDGPSDDEDGPSDDEEGLSKDGVSEYYQSDLDD) is disordered. Residues 287-305 (SDNEDGPSDDEDGPSDDEE) show a composition bias toward acidic residues.

This is an uncharacterized protein from Frog virus 3 (isolate Goorha) (FV-3).